The primary structure comprises 95 residues: FXYD domain-containing ion transport regulator 6 (95 aa).

The signal sequence occupies residues 1 to 18 (MELVLVFLCSLLAPMVLA). Over 19 to 35 (SAAEKEKEMDPFHYDYQ) the chain is Extracellular. A helical membrane pass occupies residues 36 to 57 (TLRIGGLVFAVVLFSVGILLIL). Over 58 to 95 (SRRCKCSFNQKPRAPGDEEAQVENLITANATEPQKAEN) the chain is Cytoplasmic. The tract at residues 69 to 95 (PRAPGDEEAQVENLITANATEPQKAEN) is disordered.

Belongs to the FXYD family. As to quaternary structure, regulatory subunit of the sodium/potassium-transporting ATPase which is composed of a catalytic alpha subunit, a non-catalytic beta subunit and an additional regulatory subunit. The regulatory subunit, a member of the FXYD protein family, modulates the enzymatic activity in a tissue- and isoform-specific way by changing affinities of the Na+/K+-ATPase toward Na(+), K(+) or ATP.

Its subcellular location is the cell membrane. Functionally, associates with and regulates the activity of the sodium/potassium-transporting ATPase (NKA) which catalyzes the hydrolysis of ATP coupled with the exchange of Na(+) and K(+) ions across the plasma membrane. Reduces the apparent affinity for intracellular Na(+) with no change in the apparent affinity for extracellular K(+). In addition to modulating NKA kinetics, may also function as a regulator of NKA localization to the plasma membrane. This chain is FXYD domain-containing ion transport regulator 6, found in Homo sapiens (Human).